Consider the following 373-residue polypeptide: Secondary metabolism regulator laeA (373 aa).

The segment at 55 to 81 (ERDPAAGRWHANGSPSINSTSSKNPDR) is disordered. A compositionally biased stretch (polar residues) spans 67–77 (GSPSINSTSSK).

It belongs to the methyltransferase superfamily. LaeA methyltransferase family. In terms of assembly, component of the heterotrimeric velvet complex composed of laeA, veA and velB; VeA acting as a bridging protein between laeA and velB.

The protein resides in the nucleus. The enzyme catalyses L-methionyl-[protein] + S-adenosyl-L-methionine = S-methyl-L-methionyl-[protein] + S-adenosyl-L-homocysteine. Functionally, methyltransferase that performs automethylation. No other methyl-accepting substrate has been identified yet. Component of the velvet transcription factor complex that acts as a global regulator for secondary metabolite gene expression. Positively controls expression of 20% to 40% of major classes of secondary metabolite biosynthesis genes such as nonribosomal peptide synthetases, polyketide synthases, and P450 monooxygenases. Controls the expression of the gliotoxin gene cluster. Controls the expression of the fumitremorgin, fumagillin, and pseurotin gene clusters, where genes for fumagillin and pseurotin are physically intertwined in a single supercluster. Regulates the biosynthetic genes required for endocrocin production. Secondary metabolites under the transcriptional regulation of laeA are necessary for inhibition of angiogenesis during invasive infection in mice. Controls the expression of cell surface rodA, a hydrophobin that acts as an antiphagocytic molecule. Also regulates the expression of genes involved in conidial biosynthesis. The polypeptide is Secondary metabolism regulator laeA (Aspergillus fumigatus (strain ATCC MYA-4609 / CBS 101355 / FGSC A1100 / Af293) (Neosartorya fumigata)).